We begin with the raw amino-acid sequence, 312 residues long: Transcription initiation factor IIB-2 (312 aa).

The TFIIB-type zinc-finger motif lies at 2 to 34; it reads SDAFCSDCKRHTEVVFDHSAGDTVCSECGLVLE. Residues C6, C9, C26, and C29 each contribute to the Zn(2+) site. 2 tandem repeats follow at residues 115 to 192 and 216 to 290.

The protein belongs to the TFIIB family. As to quaternary structure, associates with TFIID-IIA (DA complex) to form TFIID-IIA-IIB (DAB-complex) which is then recognized by polymerase II.

The protein resides in the nucleus. Its function is as follows. General factor that plays a major role in the activation of eukaryotic genes transcribed by RNA polymerase II. This is Transcription initiation factor IIB-2 (TFIIB2) from Arabidopsis thaliana (Mouse-ear cress).